Reading from the N-terminus, the 604-residue chain is Netrin-1 (604 aa).

Positions 1-24 are cleaved as a signal peptide; sequence MMRAVWEALAALAAVACLVGAVRG. The region spanning 47–284 is the Laminin N-terminal domain; that stretch reads HPRRCIPDFV…AVSDLQVGGR (238 aa). Residues Asn-95, Asn-116, and Asn-131 are each glycosylated (N-linked (GlcNAc...) asparagine). 15 disulfide bridges follow: Cys-119/Cys-152, Cys-285/Cys-294, Cys-287/Cys-304, Cys-306/Cys-315, Cys-318/Cys-338, Cys-341/Cys-350, Cys-343/Cys-368, Cys-371/Cys-380, Cys-383/Cys-401, Cys-404/Cys-416, Cys-406/Cys-423, Cys-425/Cys-434, Cys-437/Cys-451, Cys-472/Cys-544, and Cys-491/Cys-601. Laminin EGF-like domains follow at residues 285–340, 341–403, and 404–453; these read CKCN…ECVA, CNCN…ACKA, and CDCH…PCIK. N-linked (GlcNAc...) asparagine glycosylation is present at Asn-417. In terms of domain architecture, NTR spans 472 to 601; the sequence is CDSYCKASKG…FQQREKKGKC (130 aa). A Cell attachment site motif is present at residues 530–532; sequence RGD.

As to quaternary structure, binds to its receptors; DCC, UNC5A, UNC5B, UNC5C and probably UNC5D. Binds to its receptor; DSCAM. Interacts with APP. In the embryo, widely expressed in the developing nervous system and in mesodermal tissues.

It localises to the secreted. The protein resides in the cytoplasm. Its function is as follows. Netrins control guidance of CNS commissural axons and peripheral motor axons. Its association with either DCC or some UNC5 receptors will lead to axon attraction or repulsion, respectively. Binding to UNC5C might cause dissociation of UNC5C from polymerized TUBB3 in microtubules and thereby lead to increased microtubule dynamics and axon repulsion. Involved in dorsal root ganglion axon projection towards the spinal cord. It also serves as a survival factor via its association with its receptors which prevent the initiation of apoptosis. Involved in colorectal tumorigenesis by regulating apoptosis. In Mus musculus (Mouse), this protein is Netrin-1 (Ntn1).